The following is a 295-amino-acid chain: 4-hydroxy-tetrahydrodipicolinate synthase (295 aa).

Thr46 is a binding site for pyruvate. Residue Tyr135 is the Proton donor/acceptor of the active site. The Schiff-base intermediate with substrate role is filled by Lys164. Ile205 contacts pyruvate.

This sequence belongs to the DapA family. Homotetramer; dimer of dimers.

Its subcellular location is the cytoplasm. It carries out the reaction L-aspartate 4-semialdehyde + pyruvate = (2S,4S)-4-hydroxy-2,3,4,5-tetrahydrodipicolinate + H2O + H(+). It participates in amino-acid biosynthesis; L-lysine biosynthesis via DAP pathway; (S)-tetrahydrodipicolinate from L-aspartate: step 3/4. Its function is as follows. Catalyzes the condensation of (S)-aspartate-beta-semialdehyde [(S)-ASA] and pyruvate to 4-hydroxy-tetrahydrodipicolinate (HTPA). The polypeptide is 4-hydroxy-tetrahydrodipicolinate synthase (Aliarcobacter butzleri (strain RM4018) (Arcobacter butzleri)).